We begin with the raw amino-acid sequence, 341 residues long: Ketol-acid reductoisomerase (NADP(+)) (341 aa).

The 180-residue stretch at 2–181 (AKVYYNGDVN…GAARAGVLET (180 aa)) folds into the KARI N-terminal Rossmann domain. NADP(+) contacts are provided by residues 25-28 (YGSQ), Arg48, Ser52, and 82-85 (DEHQ). The active site involves His107. Gly133 contacts NADP(+). In terms of domain architecture, KARI C-terminal knotted spans 182–327 (TFKEETETDL…RELREMMPFV (146 aa)). Asp190, Glu194, Glu226, and Glu230 together coordinate Mg(2+). Position 251 (Ser251) interacts with substrate.

This sequence belongs to the ketol-acid reductoisomerase family. Mg(2+) is required as a cofactor.

The enzyme catalyses (2R)-2,3-dihydroxy-3-methylbutanoate + NADP(+) = (2S)-2-acetolactate + NADPH + H(+). The catalysed reaction is (2R,3R)-2,3-dihydroxy-3-methylpentanoate + NADP(+) = (S)-2-ethyl-2-hydroxy-3-oxobutanoate + NADPH + H(+). It functions in the pathway amino-acid biosynthesis; L-isoleucine biosynthesis; L-isoleucine from 2-oxobutanoate: step 2/4. Its pathway is amino-acid biosynthesis; L-valine biosynthesis; L-valine from pyruvate: step 2/4. Functionally, involved in the biosynthesis of branched-chain amino acids (BCAA). Catalyzes an alkyl-migration followed by a ketol-acid reduction of (S)-2-acetolactate (S2AL) to yield (R)-2,3-dihydroxy-isovalerate. In the isomerase reaction, S2AL is rearranged via a Mg-dependent methyl migration to produce 3-hydroxy-3-methyl-2-ketobutyrate (HMKB). In the reductase reaction, this 2-ketoacid undergoes a metal-dependent reduction by NADPH to yield (R)-2,3-dihydroxy-isovalerate. This chain is Ketol-acid reductoisomerase (NADP(+)), found in Shouchella clausii (strain KSM-K16) (Alkalihalobacillus clausii).